A 495-amino-acid chain; its full sequence is Taxoid 2-alpha-hydroxylase (495 aa).

A helical transmembrane segment spans residues 17–37 (LQSSAILLTVVSGIIVIVILL). Cys441 provides a ligand contact to heme.

It belongs to the cytochrome P450 family.

Its subcellular location is the microsome membrane. The catalysed reaction is taxusin + reduced [NADPH--hemoprotein reductase] + O2 = 2alpha-hydroxytaxusin + oxidized [NADPH--hemoprotein reductase] + H2O + H(+). The enzyme catalyses 7beta-hydroxytaxusin + reduced [NADPH--hemoprotein reductase] + O2 = 2alpha,7beta-dihydroxytaxusin + oxidized [NADPH--hemoprotein reductase] + H2O + H(+). It participates in alkaloid biosynthesis; taxol biosynthesis. In terms of biological role, catalyzes the conversion of taxusin to 2-alpha-hydroxytaxusin in taxol biosynthesis. Catalyzes the conversion of 7-beta-hydroxytaxusin to 2-alpha-7-beta-hydroxytaxusin in taxol biosynthesis. In Taxus canadensis (Canadian yew), this protein is Taxoid 2-alpha-hydroxylase.